The sequence spans 353 residues: ATPase GET3 (353 aa).

26–33 (KGGVGKTT) provides a ligand contact to ATP. Residue Asp57 is part of the active site. ATP is bound by residues Glu244 and Asn271. Residues Cys284 and Cys287 each coordinate Zn(2+).

This sequence belongs to the arsA ATPase family. In terms of assembly, homodimer. Component of the Golgi to ER traffic (GET) complex, which is composed of GET1, GET2 and GET3. Within the complex, GET1 and GET2 form a heterotetramer which is stabilized by phosphatidylinositol binding and which binds to the GET3 homodimer. Interacts with the chloride channel protein GEF1.

Its subcellular location is the cytoplasm. The protein localises to the endoplasmic reticulum. It localises to the golgi apparatus. Its function is as follows. ATPase required for the post-translational delivery of tail-anchored (TA) proteins to the endoplasmic reticulum. Recognizes and selectively binds the transmembrane domain of TA proteins in the cytosol. This complex then targets to the endoplasmic reticulum by membrane-bound receptors GET1 and GET2, where the tail-anchored protein is released for insertion. This process is regulated by ATP binding and hydrolysis. ATP binding drives the homodimer towards the closed dimer state, facilitating recognition of newly synthesized TA membrane proteins. ATP hydrolysis is required for insertion. Subsequently, the homodimer reverts towards the open dimer state, lowering its affinity for the GET1-GET2 receptor, and returning it to the cytosol to initiate a new round of targeting. Cooperates with the HDEL receptor ERD2 to mediate the ATP-dependent retrieval of resident ER proteins that contain a C-terminal H-D-E-L retention signal from the Golgi to the ER. Involved in low-level resistance to the oxyanions arsenite and arsenate, and in heat tolerance. The polypeptide is ATPase GET3 (Zygosaccharomyces rouxii (strain ATCC 2623 / CBS 732 / NBRC 1130 / NCYC 568 / NRRL Y-229)).